Consider the following 187-residue polypeptide: MTASASKTAQQLKYIKDSIKTIPDYPKAGILFRDVTSLLENPKAYSASIELLSEHYSESGVTKVVGTEARGFLFGAPVALALGVGFVPVRKPGKLPRETISESYELEYGTDTLEIHTDSIQPGDKVLVVDDLLATGGTIEATVKLIRRLGGEVVHAAFIINLPELGGEARLTQQGIHCYSLVSFDGH.

It belongs to the purine/pyrimidine phosphoribosyltransferase family. Homodimer.

The protein resides in the cytoplasm. The enzyme catalyses AMP + diphosphate = 5-phospho-alpha-D-ribose 1-diphosphate + adenine. It participates in purine metabolism; AMP biosynthesis via salvage pathway; AMP from adenine: step 1/1. Catalyzes a salvage reaction resulting in the formation of AMP, that is energically less costly than de novo synthesis. The chain is Adenine phosphoribosyltransferase from Yersinia pseudotuberculosis serotype O:3 (strain YPIII).